We begin with the raw amino-acid sequence, 151 residues long: Urease accessory protein UreE (151 aa).

The protein belongs to the UreE family.

The protein localises to the cytoplasm. Involved in urease metallocenter assembly. Binds nickel. Probably functions as a nickel donor during metallocenter assembly. The protein is Urease accessory protein UreE of Bacillus cereus (strain ATCC 10987 / NRS 248).